The sequence spans 467 residues: METLPIFMKLRDRPCLVVGGGEIASRKVSLLEKAGASVTVVSPELHPTLAKSLAEGRIRHLASVFEPAQLDGAVLVIAATDDAEVNRAVSREAQARNIPVNVVDAPELCTFIVPSIVDRSPLLVAVSSGGTAPVLARMLRTRIETLIPATYGRLAAFAAEFREAVKQRFSTGQQRRIFWEDVFQGVIGEQVLSGQEEAARHAMQQVLSGRGELHHGEVYLVGGGPGDPDLLTFRALRLMQQADVCVYDKLVSKEVMALVRRDAELIYVGKSRDQHTLPQEDINQLLVRLAKEGKRVLRLKGGDPFIFGRGGEEIETLMENGIPFQVVPGITAANGVSSYAGIPLTHRDYAQSCLFTTGHLKDGSVNLDWDALVRPNQTVVIYMGLVGLPEICRQMVAHGAPENLPIAIVQQGTTQRQRVVEGTLATLPGLVERAGLRAPCLIIVGQVVRLREKLAWFAPSPEVVSAG.

The tract at residues 1 to 203 is precorrin-2 dehydrogenase /sirohydrochlorin ferrochelatase; the sequence is METLPIFMKL…GQEEAARHAM (203 aa). Residues 22-23 and 43-44 contribute to the NAD(+) site; these read EI and PE. Ser-128 bears the Phosphoserine mark. A uroporphyrinogen-III C-methyltransferase region spans residues 216–467; that stretch reads GEVYLVGGGP…APSPEVVSAG (252 aa). Pro-225 contributes to the S-adenosyl-L-methionine binding site. The active-site Proton acceptor is the Asp-248. Lys-270 serves as the catalytic Proton donor. S-adenosyl-L-methionine is bound by residues 301–303, Ile-306, 331–332, Met-383, and Gly-412; these read GGD and TA.

In the N-terminal section; belongs to the precorrin-2 dehydrogenase / sirohydrochlorin ferrochelatase family. This sequence in the C-terminal section; belongs to the precorrin methyltransferase family.

It carries out the reaction uroporphyrinogen III + 2 S-adenosyl-L-methionine = precorrin-2 + 2 S-adenosyl-L-homocysteine + H(+). The enzyme catalyses precorrin-2 + NAD(+) = sirohydrochlorin + NADH + 2 H(+). It catalyses the reaction siroheme + 2 H(+) = sirohydrochlorin + Fe(2+). Its pathway is cofactor biosynthesis; adenosylcobalamin biosynthesis; precorrin-2 from uroporphyrinogen III: step 1/1. The protein operates within cofactor biosynthesis; adenosylcobalamin biosynthesis; sirohydrochlorin from precorrin-2: step 1/1. It participates in porphyrin-containing compound metabolism; siroheme biosynthesis; precorrin-2 from uroporphyrinogen III: step 1/1. It functions in the pathway porphyrin-containing compound metabolism; siroheme biosynthesis; siroheme from sirohydrochlorin: step 1/1. Its pathway is porphyrin-containing compound metabolism; siroheme biosynthesis; sirohydrochlorin from precorrin-2: step 1/1. In terms of biological role, multifunctional enzyme that catalyzes the SAM-dependent methylations of uroporphyrinogen III at position C-2 and C-7 to form precorrin-2 via precorrin-1. Then it catalyzes the NAD-dependent ring dehydrogenation of precorrin-2 to yield sirohydrochlorin. Finally, it catalyzes the ferrochelation of sirohydrochlorin to yield siroheme. The chain is Siroheme synthase from Methylobacillus flagellatus (strain ATCC 51484 / DSM 6875 / VKM B-1610 / KT).